A 156-amino-acid polypeptide reads, in one-letter code: Small ribosomal subunit protein bS16 (156 aa).

2 stretches are compositionally biased toward low complexity: residues 113 to 123 (AESGTTAAATT) and 137 to 156 (EAPA…ASES). The tract at residues 113–156 (AESGTTAAATTPKKKKAPKKDEAAEAPAEAAEAPAEAADAASES) is disordered.

Belongs to the bacterial ribosomal protein bS16 family.

In Mycolicibacterium smegmatis (strain ATCC 700084 / mc(2)155) (Mycobacterium smegmatis), this protein is Small ribosomal subunit protein bS16.